A 3392-amino-acid chain; its full sequence is MNNQRKKTGRPSFNMLKRARNRVSTVSQLAKRFSKGLLSGQGPMKLVMAFIAFLRFLAIPPTAGILARWGSFKKNGAIKVLRGFKKEISNMLNIMNRRKRSVTMLLMLLPTALAFHLTTRGGEPHMIVSKQERGKSLLFKTSAGVNMCTLIAMDLGELCEDTMTYKCPRITETEPDDVDCWCNATETWVTYGTCSQTGEHRRDKRSVALAPHVGLGLETRTETWMSSEGAWKQIQKVETWALRHPGFTVIALFLAHAIGTSITQKGIIFILLMLVTPSMAMRCVGIGNRDFVEGLSGATWVDVVLEHGSCVTTMAKDKPTLDIELLKTEVTNPAVLRKLCIEAKISNTTTDSRCPTQGEATLVEEQDTNFVCRRTFVDRGWGNGCGLFGKGSLITCAKFKCVTKLEGKIVQYENLKYSVIVTVHTGDQHQVGNETTEHGTTATITPQAPTSEIQLTDYGALTLDCSPRTGLDFNEMVLLTMEKKSWLVHKQWFLDLPLPWTSGASTSQETWNRQDLLVTFKTAHAKKQEVVVLGSQEGAMHTALTGATEIQTSGTTTIFAGHLKCRLKMDKLTLKGMSYVMCTGSFKLEKEVAETQHGTVLVQVKYEGTDAPCKIPFSSQDEKGVTQNGRLITANPIVTDKEKPVNIEAEPPFGESYIVVGAGEKALKLSWFKKGSSIGKMFEATARGARRMAILGDTAWDFGSIGGVFTSVGKLIHQIFGTAYGVLFSGVSWTMKIGIGILLTWLGLNSRSTSLSMTCIAVGMVTLYLGVMVQADSGCVINWKGRELKCGSGIFVTNEVHTWTEQYKFQADSPKRLSAAIGKAWEEGVCGIRSATRLENIMWKQISNELNHILLENDMKFTVVVGDVSGILAQGKKMIRPQPMEHKYSWKSWGKAKIIGADVQNTTFIIDGPNTPECPDNQRAWNIWEVEDYGFGIFTTNIWLKLRDSYTQVCDHRLMSAAIKDSKAVHADMGYWIESEKNETWKLARASFIEVKTCIWPKSHTLWSNGVLESEMIIPKIYGGPISQHNYRPGYFTQTAGPWHLGKLELDFDLCEGTTVVVDEHCGNRGPSLRTTTVTGKTIHEWCCRSCTLPPLRFKGEDGCWYGMEIRPVKEKEENLVKSMVSAGSGEVDSFSLGLLCISIMIEEVMRSRWSRKMLMTGTLAVFLLLTMGQLTWNDLIRLCIMVGANASDKMGMGTTYLALMATFRMRPMFAVGLLFRRLTSREVLLLTVGLSLVASVELPNSLEELGDGLAMGIMMLKLLTDFQSHQLWATLLSLTFVKTTFSLHYAWKTMAMILSIVSLFPLCLSTTSQKTTWLPVLLGSLGCKPLTMFLITENKIWGRKSWPLNEGIMAVGIVSILLSSLLKNDVPLAGPLIAGGMLIACYVISGSSADLSLEKAAEVSWEEEAEHSGASHNILVEVQDDGTMKIKDEERDDTLTILLKATLLAISGVYPMSIPATLFVWYFWQKKKQRSGVLWDTPSPPEVERAVLDDGIYRILQRGLLGRSQVGVGVFQEGVFHTMWHVTRGAVLMYQGKRLEPSWASVKKDLISYGGGWRFQGSWNAGEEVQVIAVEPGKNPKNVQTAPGTFKTPEGEVGAIALDFKPGTSGSPIVNREGKIVGLYGNGVVTTSGTYVSAIAQAKASQEGPLPEIEDEVFRKRNLTIMDLHPGSGKTRRYLPAIVREAIRRNVRTLVLAPTRVVASEMAEALKGMPIRYQTTAVKSEHTGKEIVDLMCHATFTMRLLSPVRVPNYNMIIMDEAHFTDPASIAARGYISTRVGMGEAAAIFMTATPPGSVEAFPQSNAVIQDEERDIPERSWNSGYDWITDFPGKTVWFVPSIKSGNDIANCLRKNGKRVVQLSRKTFDTEYQKTKNNDWDYVVTTDISEMGANFRADRVIDPRRCLKPVILKDGPERVILAGPMPVTVASAAQRRGRIGRNQNKEGDQYIYMGQPLNNDEDHAHWTEAKMLLDNINTPEGIIPALFEPEREKSAAIDGEYRLRGEARKTFVELMRRGDLPVWLSYKVASEGFQYSDRRWCFDGERNNQVLEENMDVEIWTKEGERKKLRPRWLDARTYSDPLALREFKEFAAGRRSVSGDLILEIGKLPQHLTQRAQNALDNLVMLHNSEQGGKAYRHAMEELPDTIETLMLLALIAVLTGGVTLFFLSGRGLGKTSIGLLCVIASSALLWMASVEPHWIAASIILEFFLMVLLIPEPDRQRTPQDNQLAYVVIGLLFMILTAAANEMGLLETTKKDLGIGHAAAENHHHAAMLDVDLHPASAWTLYAVATTIITPMMRHTIENTTANISLTAIANQAAILMGLDKGWPISKMDIGVPLLALGCYSQVNPLTLTAAVFMLVAHYAIIGPGLQAKATREAQKRTAAGIMKNPTVDGIVAIDLDPVVYDAKFEKQLGQIMLLILCTSQILLMRTTWALCESITLATGPLTTLWEGSPGKFWNTTIAVSMANIFRGSYLAGAGLAFSLMKSLGGGRRGTGAQGETLGEKWKRQLNQLSKSEFNTYKRSGIIEVDRSEAKEGLKRGEPTKHAVSRGTAKLRWFVERNLVKPEGKVIDLGCGRGGWSYYCAGLKKVTEVKGYTKGGPGHEEPIPMATYGWNLVKLYSGKDVFFTPPEKCDTLLCDIGESSPNPTIEEGRTLRVLKMVEPWLRGNQFCIKILNPYMPSVVETLEQMQRKHGGMLVRNPLSRNSTHEMYWVSCGTGNIVSAVNMTSRMLLNRFTMAHRKPTYERDVDLGAGTRHVAVEPEVANLDIIGQRIENIKNGHKSTWHYDEDNPYKTWAYHGSYEVKPSGSASSMVNGVVRLLTKPWDVIPMVTQIAMTDTTPFGQQRVFKEKVDTRTPKAKRGTAQIMEVTARWLWGFLSRNKKPRICTREEFTRKVRSNAAIGAVFVDENQWNSAKEAVEDERFWDLVHRERELHKQGKCATCVYNMMGKREKKLGEFGKAKGSRAIWYMWLGARFLEFEALGFMNEDHWFSRENSLSGVEGEGLHKLGYILRDISKIPGGNMYADDTAGWDTRITEDDLQNEAKITDIMEPEHALLATSIFKLTYQNKVVRVQRPAKNGTVMDVISRRDQRGSGQVGTYGLNTFTNMEAQLIRQMESEGIFSPSELETPNLAERVLDWLKKHGTERLKRMAISGDDCVVKPIDDRFATALTALNDMGKVRKDIPQWEPSKGWNDWQQVPFCSHHFHQLIMKDGREIVVPCRNQDELVGRARVSQGAGWSLRETACLGKSYAQMWQLMYFHRRDLRLAANAICSAVPVDWVPTSRTTWSIHAHHQWMTTEDMLSVWNRVWIEENPWMEDKTHVSSWEDVPYLGKREDRWCGSLIGLTARATWATNIQVAINQVRRLIGNENYLDFMTSMKRFKNESDPEGALW.

The interaction with host EXOC1 stretch occupies residues 1 to 15 (MNNQRKKTGRPSFNM). The Cytoplasmic portion of the chain corresponds to 1 to 101 (MNNQRKKTGR…LNIMNRRKRS (101 aa)). Positions 37-72 (LLSGQGPMKLVMAFIAFLRFLAIPPTAGILARWGSF) are hydrophobic; homodimerization of capsid protein C. A propeptide spans 101–114 (SVTMLLMLLPTALA) (ER anchor for the capsid protein C, removed in mature form by serine protease NS3). A helical membrane pass occupies residues 102-119 (VTMLLMLLPTALAFHLTT). Over 120 to 242 (RGGEPHMIVS…QIQKVETWAL (123 aa)) the chain is Extracellular. N-linked (GlcNAc...) asparagine; by host glycosylation occurs at Asn-183. A helical transmembrane segment spans residues 243 to 260 (RHPGFTVIALFLAHAIGT). Ser-261 is a topological domain (cytoplasmic). A helical transmembrane segment spans residues 262–280 (ITQKGIIFILLMLVTPSMA). Residues 281-725 (MRCVGIGNRD…IHQIFGTAYG (445 aa)) are Extracellular-facing. 4 cysteine pairs are disulfide-bonded: Cys-283–Cys-310, Cys-340–Cys-401, Cys-354–Cys-385, and Cys-372–Cys-396. The N-linked (GlcNAc...) asparagine; by host glycan is linked to Asn-347. The tract at residues 378 to 391 (DRGWGNGCGLFGKG) is fusion peptide. The N-linked (GlcNAc...) asparagine; by host glycan is linked to Asn-433. 2 cysteine pairs are disulfide-bonded: Cys-465/Cys-565 and Cys-582/Cys-613. The chain crosses the membrane as a helical span at residues 726–746 (VLFSGVSWTMKIGIGILLTWL). At 747–752 (GLNSRS) the chain is on the cytoplasmic side. Residues 753-773 (TSLSMTCIAVGMVTLYLGVMV) form a helical membrane-spanning segment. The Extracellular segment spans residues 774–1195 (QADSGCVINW…MVGANASDKM (422 aa)). 6 disulfides stabilise this stretch: Cys-779-Cys-790, Cys-830-Cys-918, Cys-954-Cys-998, Cys-1055-Cys-1104, Cys-1066-Cys-1088, and Cys-1087-Cys-1091. N-linked (GlcNAc...) asparagine; by host glycosylation is found at Asn-905 and Asn-982. Asn-1190 is a glycosylation site (N-linked (GlcNAc...) asparagine; by host). The helical transmembrane segment at 1196 to 1220 (GMGTTYLALMATFRMRPMFAVGLLF) threads the bilayer. At 1221-1226 (RRLTSR) the chain is on the cytoplasmic side. A helical transmembrane segment spans residues 1227–1245 (EVLLLTVGLSLVASVELPN). The Lumenal portion of the chain corresponds to 1246-1269 (SLEELGDGLAMGIMMLKLLTDFQS). Residues 1270 to 1290 (HQLWATLLSLTFVKTTFSLHY) form a helical membrane-spanning segment. A topological domain (cytoplasmic) is located at residue Ala-1291. Residues 1292–1310 (WKTMAMILSIVSLFPLCLS) traverse the membrane as a helical segment. The Lumenal portion of the chain corresponds to 1311–1315 (TTSQK). A helical membrane pass occupies residues 1316–1336 (TTWLPVLLGSLGCKPLTMFLI). The Cytoplasmic portion of the chain corresponds to 1337 to 1351 (TENKIWGRKSWPLNE). The chain crosses the membrane as a helical span at residues 1352–1370 (GIMAVGIVSILLSSLLKND). Position 1371 (Val-1371) is a topological domain, lumenal. Residues 1372-1391 (PLAGPLIAGGMLIACYVISG) traverse the membrane as a helical segment. Over 1392–1447 (SSADLSLEKAAEVSWEEEAEHSGASHNILVEVQDDGTMKIKDEERDDTLTILLKAT) the chain is Cytoplasmic. Positions 1398-1437 (LEKAAEVSWEEEAEHSGASHNILVEVQDDGTMKIKDEERD) are interacts with and activates NS3 protease. Positions 1448–1468 (LLAISGVYPMSIPATLFVWYF) form an intramembrane region, helical. Residues 1469–2148 (WQKKKQRSGV…MEELPDTIET (680 aa)) lie on the Cytoplasmic side of the membrane. Positions 1476 to 1653 (SGVLWDTPSP…KASQEGPLPE (178 aa)) constitute a Peptidase S7 domain. Active-site charge relay system; for serine protease NS3 activity residues include His-1526, Asp-1550, and Ser-1610. Residues 1656–1812 (DEVFRKRNLT…QSNAVIQDEE (157 aa)) enclose the Helicase ATP-binding domain. Positions 1660-1663 (RKRN) are important for RNA-binding. 1669–1676 (LHPGSGKT) lines the ATP pocket. The short motif at 1760 to 1763 (DEAH) is the DEAH box element. The 167-residue stretch at 1822–1988 (SGYDWITDFP…GIIPALFEPE (167 aa)) folds into the Helicase C-terminal domain. Lys-1864 is modified (N6-acetyllysine; by host). The helical transmembrane segment at 2149–2169 (LMLLALIAVLTGGVTLFFLSG) threads the bilayer. Residues 2170–2171 (RG) are Lumenal-facing. Residues 2172–2192 (LGKTSIGLLCVIASSALLWMA) constitute an intramembrane region (helical). Ser-2193 is a topological domain (lumenal). A helical membrane pass occupies residues 2194–2214 (VEPHWIAASIILEFFLMVLLI). Residues 2215 to 2229 (PEPDRQRTPQDNQLA) are Cytoplasmic-facing. Residues 2230–2244 (YVVIGLLFMILTAAA) form a helical membrane-spanning segment. Residues 2245–2276 (NEMGLLETTKKDLGIGHAAAENHHHAAMLDVD) are Lumenal-facing. Positions 2277-2297 (LHPASAWTLYAVATTIITPMM) form an intramembrane region, helical. Residues 2298–2349 (RHTIENTTANISLTAIANQAAILMGLDKGWPISKMDIGVPLLALGCYSQVNP) lie on the Lumenal side of the membrane. N-linked (GlcNAc...) asparagine; by host glycans are attached at residues Asn-2303 and Asn-2307. Residues 2350 to 2370 (LTLTAAVFMLVAHYAIIGPGL) form a helical membrane-spanning segment. The Cytoplasmic segment spans residues 2371 to 2415 (QAKATREAQKRTAAGIMKNPTVDGIVAIDLDPVVYDAKFEKQLGQ). The helical transmembrane segment at 2416 to 2436 (IMLLILCTSQILLMRTTWALC) threads the bilayer. At 2437–2461 (ESITLATGPLTTLWEGSPGKFWNTT) the chain is on the lumenal side. Asn-2459 carries an N-linked (GlcNAc...) asparagine; by host glycan. Residues 2462-2482 (IAVSMANIFRGSYLAGAGLAF) form a helical membrane-spanning segment. The Cytoplasmic portion of the chain corresponds to 2483 to 3392 (SLMKSLGGGR…NESDPEGALW (910 aa)). The mRNA cap 0-1 NS5-type MT domain maps to 2495–2756 (TGAQGETLGE…DVDLGAGTRH (262 aa)). Ser-2549 provides a ligand contact to S-adenosyl-L-methionine. Ser-2549 is modified (phosphoserine). Residue Lys-2554 is the For 2'-O-MTase activity of the active site. The SUMO-interacting motif signature appears at 2570–2573 (VIDL). S-adenosyl-L-methionine is bound by residues Gly-2579, Trp-2580, Thr-2597, Lys-2598, Asp-2624, and Val-2625. Catalysis depends on Asp-2639, which acts as the For 2'-O-MTase activity. Ile-2640 lines the S-adenosyl-L-methionine pocket. Catalysis depends on for 2'-O-MTase activity residues Lys-2673 and Glu-2709. S-adenosyl-L-methionine is bound at residue Tyr-2711. Zn(2+) is bound by residues Glu-2930, His-2934, Cys-2939, and Cys-2942. The region spanning 3020–3169 (GNMYADDTAG…KPIDDRFATA (150 aa)) is the RdRp catalytic domain. Zn(2+) is bound by residues His-3204, Cys-3220, and Cys-3339.

This sequence in the N-terminal section; belongs to the class I-like SAM-binding methyltransferase superfamily. mRNA cap 0-1 NS5-type methyltransferase family. In terms of assembly, homodimer. Interacts (via N-terminus) with host EXOC1 (via C-terminus); this interaction results in EXOC1 degradation through the proteasome degradation pathway. Forms heterodimers with envelope protein E in the endoplasmic reticulum and Golgi. As to quaternary structure, homodimer; in the endoplasmic reticulum and Golgi. Interacts with protein prM. Interacts with non-structural protein 1. In terms of assembly, homodimer; Homohexamer when secreted. Interacts with envelope protein E. Interacts (via N-terminus) with serine protease NS3. As to quaternary structure, forms a heterodimer with serine protease NS3. May form homooligomers. In terms of assembly, forms a heterodimer with NS2B. Interacts with NS4B. Interacts with unphosphorylated RNA-directed RNA polymerase NS5; this interaction stimulates RNA-directed RNA polymerase NS5 guanylyltransferase activity. Interacts with host SHFL. Interacts with host MAVS; this interaction inhibits the synthesis of IFN-beta. Interacts with host SHFL. Interacts with host AUP1; the interaction occurs in the presence of Dengue virus NS4B and induces lipophagy which facilitates production of virus progeny particles. As to quaternary structure, interacts with serine protease NS3. In terms of assembly, homodimer. Interacts with host STAT2; this interaction inhibits the phosphorylation of the latter, and, when all viral proteins are present (polyprotein), targets STAT2 for degradation. Interacts with serine protease NS3. In terms of processing, sumoylation of RNA-directed RNA polymerase NS5 increases NS5 protein stability allowing proper viral RNA replication. Specific enzymatic cleavages in vivo yield mature proteins. Cleavages in the lumen of endoplasmic reticulum are performed by host signal peptidase, whereas cleavages in the cytoplasmic side are performed by the Serine protease NS3. Signal cleavage at the 2K-4B site requires a prior NS3 protease-mediated cleavage at the 4A-2K site. Post-translationally, cleaved in post-Golgi vesicles by a host furin, releasing the mature small envelope protein M, and peptide pr. This cleavage is incomplete as up to 30% of viral particles still carry uncleaved prM. In terms of processing, N-glycosylated. The excreted form is glycosylated and this is required for efficient secretion of the protein from infected cells. Acetylated by host KAT5. Acetylation modulates NS3 RNA-binding and unwinding activities and plays an important positive role for viral replication. Post-translationally, phosphorylated on serines residues. This phosphorylation may trigger NS5 nuclear localization. In terms of processing, N-glycosylated.

It localises to the virion. The protein resides in the host nucleus. The protein localises to the host cytoplasm. Its subcellular location is the host perinuclear region. It is found in the secreted. It localises to the virion membrane. The protein resides in the host endoplasmic reticulum membrane. The protein localises to the host mitochondrion. The catalysed reaction is Selective hydrolysis of -Xaa-Xaa-|-Yaa- bonds in which each of the Xaa can be either Arg or Lys and Yaa can be either Ser or Ala.. It catalyses the reaction RNA(n) + a ribonucleoside 5'-triphosphate = RNA(n+1) + diphosphate. The enzyme catalyses a ribonucleoside 5'-triphosphate + H2O = a ribonucleoside 5'-diphosphate + phosphate + H(+). It carries out the reaction ATP + H2O = ADP + phosphate + H(+). The catalysed reaction is a 5'-end (5'-triphosphoguanosine)-ribonucleoside in mRNA + S-adenosyl-L-methionine = a 5'-end (N(7)-methyl 5'-triphosphoguanosine)-ribonucleoside in mRNA + S-adenosyl-L-homocysteine. It catalyses the reaction a 5'-end (N(7)-methyl 5'-triphosphoguanosine)-ribonucleoside in mRNA + S-adenosyl-L-methionine = a 5'-end (N(7)-methyl 5'-triphosphoguanosine)-(2'-O-methyl-ribonucleoside) in mRNA + S-adenosyl-L-homocysteine + H(+). In terms of biological role, plays a role in virus budding by binding to the cell membrane and gathering the viral RNA into a nucleocapsid that forms the core of a mature virus particle. During virus entry, may induce genome penetration into the host cytoplasm after hemifusion induced by the surface proteins. Can migrate to the cell nucleus where it modulates host functions. Overcomes the anti-viral effects of host EXOC1 by sequestering and degrading the latter through the proteasome degradation pathway. Its function is as follows. Inhibits RNA silencing by interfering with host Dicer. Functionally, prevents premature fusion activity of envelope proteins in trans-Golgi by binding to envelope protein E at pH6.0. After virion release in extracellular space, gets dissociated from E dimers. Acts as a chaperone for envelope protein E during intracellular virion assembly by masking and inactivating envelope protein E fusion peptide. prM is the only viral peptide matured by host furin in the trans-Golgi network probably to avoid catastrophic activation of the viral fusion activity in acidic Golgi compartment prior to virion release. prM-E cleavage is inefficient, and many virions are only partially matured. These uncleaved prM would play a role in immune evasion. In terms of biological role, may play a role in virus budding. Exerts cytotoxic effects by activating a mitochondrial apoptotic pathway through M extodomain. May display a viroporin activity. Its function is as follows. Binds to host cell surface receptor and mediates fusion between viral and cellular membranes. Envelope protein is synthesized in the endoplasmic reticulum in the form of heterodimer with protein prM. They play a role in virion budding in the ER, and the newly formed immature particle is covered with 60 spikes composed of heterodimer between precursor prM and envelope protein E. The virion is transported to the Golgi apparatus where the low pH causes dissociation of PrM-E heterodimers and formation of E homodimers. prM-E cleavage is ineficient, and many virions are only partially matured. These uncleaved prM would play a role in immune evasion. Functionally, involved in immune evasion, pathogenesis and viral replication. Once cleaved off the polyprotein, is targeted to three destinations: the viral replication cycle, the plasma membrane and the extracellular compartment. Essential for viral replication. Required for formation of the replication complex and recruitment of other non-structural proteins to the ER-derived membrane structures. Excreted as a hexameric lipoparticle that plays a role against host immune response. Antagonizing the complement function. Binds to the host macrophages and dendritic cells. Inhibits signal transduction originating from Toll-like receptor 3 (TLR3). Disrupts the host endothelial glycocalyx layer of host pulmonary microvascular endothelial cells, inducing degradation of sialic acid and shedding of heparan sulfate proteoglycans. NS1 induces expression of sialidases, heparanase, and activates cathepsin L, which activates heparanase via enzymatic cleavage. These effects are probably linked to the endothelial hyperpermeability observed in severe dengue disease. In terms of biological role, component of the viral RNA replication complex that functions in virion assembly and antagonizes the host immune response. Its function is as follows. Required cofactor for the serine protease function of NS3. May have membrane-destabilizing activity and form viroporins. Functionally, displays three enzymatic activities: serine protease, NTPase and RNA helicase. NS3 serine protease, in association with NS2B, performs its autocleavage and cleaves the polyprotein at dibasic sites in the cytoplasm: C-prM, NS2A-NS2B, NS2B-NS3, NS3-NS4A, NS4A-2K and NS4B-NS5. NS3 RNA helicase binds RNA and unwinds dsRNA in the 3' to 5' direction. Regulates the ATPase activity of the NS3 helicase activity. NS4A allows NS3 helicase to conserve energy during unwinding. Plays a role in the inhibition of the host innate immune response. Interacts with host MAVS and thereby prevents the interaction between RIGI and MAVS. In turn, IFN-beta production is impaired. Interacts with host AUP1 which mediates induction of lipophagy in host cells and facilitates production of virus progeny particles. In terms of biological role, functions as a signal peptide for NS4B and is required for the interferon antagonism activity of the latter. Its function is as follows. Induces the formation of ER-derived membrane vesicles where the viral replication takes place. Inhibits interferon (IFN)-induced host STAT1 phosphorylation and nuclear translocation, thereby preventing the establishment of a cellular antiviral state by blocking the IFN-alpha/beta pathway. Functionally, replicates the viral (+) and (-) RNA genome, and performs the capping of genomes in the cytoplasm. NS5 methylates viral RNA cap at guanine N-7 and ribose 2'-O positions. Besides its role in RNA genome replication, also prevents the establishment of cellular antiviral state by blocking the interferon-alpha/beta (IFN-alpha/beta) signaling pathway. Inhibits host TYK2 and STAT2 phosphorylation, thereby preventing activation of JAK-STAT signaling pathway. In Aedes aegypti (Yellowfever mosquito), this protein is Genome polyprotein.